Consider the following 278-residue polypeptide: MVSKVKIGIIGGSGLDDSQIIENRTERVVNTHFGIPSDVLIEGKIAGVDCVLLARHGRNHSIMPSNVNYRANIWALKTLGCTHVIVSTATGSLKEEIHPGDIVIPDNFIDRTTKRVQTFYDGNELLSGVCHIPMEPAFCNRTRDVLIETARGIGLGVHEKGTVVTIEGPRFSSKAESNLFRQWGADLVNMTLVPEVVLAKEAGLCYAAIAMATDYDCWREAGEDVNVADVLATFKKNVTKVTDLIINAIPKVAALDWSDTIEELGKTVNTSIMLPHSN.

Phosphate-binding positions include Ser13, 55–56, and 88–89; these read RH and TA. Met190 contributes to the substrate binding site. Phosphate is bound at residue Thr191. Residue 214 to 216 coordinates substrate; it reads DYD.

It belongs to the PNP/MTAP phosphorylase family. MTAP subfamily. Homotrimer.

The protein localises to the cytoplasm. It localises to the nucleus. It carries out the reaction S-methyl-5'-thioadenosine + phosphate = 5-(methylsulfanyl)-alpha-D-ribose 1-phosphate + adenine. It functions in the pathway amino-acid biosynthesis; L-methionine biosynthesis via salvage pathway; S-methyl-5-thio-alpha-D-ribose 1-phosphate from S-methyl-5'-thioadenosine (phosphorylase route): step 1/1. Its function is as follows. Catalyzes the reversible phosphorylation of S-methyl-5'-thioadenosine (MTA) to adenine and 5-methylthioribose-1-phosphate. Involved in the breakdown of MTA, a major by-product of polyamine biosynthesis. Responsible for the first step in the methionine salvage pathway after MTA has been generated from S-adenosylmethionine. Has broad substrate specificity with 6-aminopurine nucleosides as preferred substrates. The chain is S-methyl-5'-thioadenosine phosphorylase from Anopheles gambiae (African malaria mosquito).